Consider the following 341-residue polypeptide: Transcription factor VIP1 (341 aa).

3 disordered regions span residues 1-33 (MEGGGRGPNQTILSEIEHMPEAPRQRISHHRRA), 59-106 (SLDF…PEAR), and 135-156 (SSGEKKKGNHHHSRSNSMDGEM). Positions 1–162 (MEGGGRGPNQ…DGEMSSASFN (162 aa)) are necessary and sufficient for transient T-DNA transformation end expression. The span at 15-24 (EIEHMPEAPR) shows a compositional bias: basic and acidic residues. Over residues 71-80 (QSQQQPQASP) the composition is skewed to low complexity. At serine 79 the chain carries Phosphoserine. Residues 163–341 (IESILASVSG…PSYMDFTKRG (179 aa)) form an involved in homomultimerization and histone H2A binding region. A bZIP domain is found at 194 to 257 (DPKRAKRILA…SELNTENKHL (64 aa)). Positions 196–217 (KRAKRILANRQSAARSKERKIR) are basic motif. A Nuclear localization signal motif is present at residues 198 to 205 (AKRILANR). The tract at residues 222–257 (LERKVQTLQNEATTLSAQVTMLQRGTSELNTENKHL) is leucine-zipper. The span at 307-331 (SQQSAMNQFGNKTNQQMSTNGQPSL) shows a compositional bias: polar residues. A disordered region spans residues 307 to 341 (SQQSAMNQFGNKTNQQMSTNGQPSLPSYMDFTKRG).

The protein belongs to the bZIP family. In terms of assembly, forms homomultimers. Interacts with Agrobacterium tumefaciens VirE2 and mediates its translocation to the host nucleus. Binds to VIP2. Forms a complex made of Agrobacterium VirE2, VIP1, VIP2 and single-stranded DNA (ssDNA). The interaction with KAP1 mediates its nuclear import. Binds to the H2A histone RAT5. Interacts with MPK3 and Agrobacterium virF. Forms a complex made of VIP1, VBF and Agrobacterium virE2. Interacts with SCF(VBF) E3 ubiquitin ligase complex. Binds directly to VBF. Forms heterodimers with BZIP34 and BZIP61. In terms of processing, phosphorylated by MPK3. This phosphorylation promotes nuclear localization. As to expression, mostly expressed in dividing cells, present in leaves, roots and seedlings.

The protein localises to the cytoplasm. It is found in the nucleus. Its function is as follows. Transcription activator that binds specifically to the VIP1 response elements (VREs) DNA sequence 5'-ACNGCT-3' found in some stress genes (e.g. TRX8 and MYB44), when phosphorylated/activated by MPK3. Required for Agrobacterium VirE2 nuclear import and tumorigenicity. Promotes transient expression of T-DNA in early stages by interacting with VirE2 in complex with the T-DNA and facilitating its translocation to the nucleus, and mediates stable genetic transformation by Agrobacterium by binding H2A histone. Prevents cell differentiation and shoot formation. Limits sulfate utilization efficiency (SUE) and sulfate uptake, especially in low-sulfur conditions. Plays a role in osmosensory response by binding to the 5'-AGCTGT/G-3' DNA sequence found in the promoters of the hypoosmolarity-responsive genes CYP707A1 and CYP707A3. Involved in the negative regulation of touch-induced root bending and salt-dependent root bending. In Arabidopsis thaliana (Mouse-ear cress), this protein is Transcription factor VIP1.